The chain runs to 291 residues: tRNA U34 carboxymethyltransferase (291 aa).

Residues lysine 61, tryptophan 75, lysine 80, glycine 100, aspartate 122 to serine 124, valine 149 to glutamate 150, tyrosine 169, and arginine 284 each bind carboxy-S-adenosyl-L-methionine.

The protein belongs to the class I-like SAM-binding methyltransferase superfamily. CmoB family. As to quaternary structure, homotetramer.

The catalysed reaction is carboxy-S-adenosyl-L-methionine + 5-hydroxyuridine(34) in tRNA = 5-carboxymethoxyuridine(34) in tRNA + S-adenosyl-L-homocysteine + H(+). Catalyzes carboxymethyl transfer from carboxy-S-adenosyl-L-methionine (Cx-SAM) to 5-hydroxyuridine (ho5U) to form 5-carboxymethoxyuridine (cmo5U) at position 34 in tRNAs. The polypeptide is tRNA U34 carboxymethyltransferase (Campylobacter jejuni (strain RM1221)).